The chain runs to 465 residues: Iron-sulfur cluster assembly SufBD family protein SE_0610 (465 aa).

The protein belongs to the iron-sulfur cluster assembly SufBD family.

This chain is Iron-sulfur cluster assembly SufBD family protein SE_0610, found in Staphylococcus epidermidis (strain ATCC 12228 / FDA PCI 1200).